Here is a 197-residue protein sequence, read N- to C-terminus: NADH-quinone oxidoreductase subunit C (197 aa).

Belongs to the complex I 30 kDa subunit family. In terms of assembly, NDH-1 is composed of 14 different subunits. Subunits NuoB, C, D, E, F, and G constitute the peripheral sector of the complex.

The protein resides in the cell inner membrane. The catalysed reaction is a quinone + NADH + 5 H(+)(in) = a quinol + NAD(+) + 4 H(+)(out). Functionally, NDH-1 shuttles electrons from NADH, via FMN and iron-sulfur (Fe-S) centers, to quinones in the respiratory chain. The immediate electron acceptor for the enzyme in this species is believed to be ubiquinone. Couples the redox reaction to proton translocation (for every two electrons transferred, four hydrogen ions are translocated across the cytoplasmic membrane), and thus conserves the redox energy in a proton gradient. The chain is NADH-quinone oxidoreductase subunit C from Methylobacillus flagellatus (strain ATCC 51484 / DSM 6875 / VKM B-1610 / KT).